A 303-amino-acid polypeptide reads, in one-letter code: Oxygen-dependent coproporphyrinogen-III oxidase (303 aa).

Ser-93 serves as a coordination point for substrate. A divalent metal cation is bound by residues His-97 and His-107. His-107 serves as the catalytic Proton donor. 109 to 111 (NVR) is a binding site for substrate. His-149 and His-179 together coordinate a divalent metal cation. Positions 244–279 (YVEFNLVFDRGTLFGLQSGGRTESILLSMPPLAQWR) are important for dimerization. Residue 262–264 (GGR) coordinates substrate.

This sequence belongs to the aerobic coproporphyrinogen-III oxidase family. As to quaternary structure, homodimer. It depends on a divalent metal cation as a cofactor.

Its subcellular location is the cytoplasm. It carries out the reaction coproporphyrinogen III + O2 + 2 H(+) = protoporphyrinogen IX + 2 CO2 + 2 H2O. Its pathway is porphyrin-containing compound metabolism; protoporphyrin-IX biosynthesis; protoporphyrinogen-IX from coproporphyrinogen-III (O2 route): step 1/1. In terms of biological role, involved in the heme biosynthesis. Catalyzes the aerobic oxidative decarboxylation of propionate groups of rings A and B of coproporphyrinogen-III to yield the vinyl groups in protoporphyrinogen-IX. This is Oxygen-dependent coproporphyrinogen-III oxidase from Bordetella parapertussis (strain 12822 / ATCC BAA-587 / NCTC 13253).